The following is a 225-amino-acid chain: UPF0758 protein BCE33L4198 (225 aa).

Residues Ser-103–Ile-225 enclose the MPN domain. 3 residues coordinate Zn(2+): His-174, His-176, and Asp-187. The JAMM motif signature appears at His-174–Asp-187.

The protein belongs to the UPF0758 family.

The sequence is that of UPF0758 protein BCE33L4198 from Bacillus cereus (strain ZK / E33L).